A 370-amino-acid polypeptide reads, in one-letter code: Chaperone protein DnaJ (370 aa).

In terms of domain architecture, J spans 4–68 (DYYQVLGVSK…QKRAAYDRFG (65 aa)). A CR-type zinc finger spans residues 133–211 (GIEKNISFSS…CHGMGRYHKQ (79 aa)). Zn(2+)-binding residues include Cys146, Cys149, Cys163, Cys166, Cys185, Cys188, Cys199, and Cys202. CXXCXGXG motif repeat units follow at residues 146-153 (CDTCHGTG), 163-170 (CDACGGVG), 185-192 (CHKCQGNG), and 199-206 (CKKCHGMG).

This sequence belongs to the DnaJ family. In terms of assembly, homodimer. Requires Zn(2+) as cofactor.

The protein resides in the cytoplasm. Participates actively in the response to hyperosmotic and heat shock by preventing the aggregation of stress-denatured proteins and by disaggregating proteins, also in an autonomous, DnaK-independent fashion. Unfolded proteins bind initially to DnaJ; upon interaction with the DnaJ-bound protein, DnaK hydrolyzes its bound ATP, resulting in the formation of a stable complex. GrpE releases ADP from DnaK; ATP binding to DnaK triggers the release of the substrate protein, thus completing the reaction cycle. Several rounds of ATP-dependent interactions between DnaJ, DnaK and GrpE are required for fully efficient folding. Also involved, together with DnaK and GrpE, in the DNA replication of plasmids through activation of initiation proteins. The sequence is that of Chaperone protein DnaJ from Rickettsia prowazekii (strain Madrid E).